A 933-amino-acid chain; its full sequence is Melanoma-associated antigen E1 (933 aa).

Disordered regions lie at residues 1–113 (MSLV…VSAG), 149–236 (GASI…GINL), 256–282 (SDIS…VQST), and 360–393 (TSGL…EDEN). A compositionally biased stretch (basic residues) spans 8–23 (SRRRRGGRANGRKNSG). Composition is skewed to polar residues over residues 64–97 (GGSS…QLPT), 149–166 (GASI…NVQP), 173–184 (GTSVPPTFSEES), and 219–236 (APST…GINL). MAGE domains are found at residues 467–666 (MEQN…YNEA) and 721–912 (LESK…YREA). Residues 719-933 (SRLESKSRKL…RRPLVVRNLR (215 aa)) are interaction with DTNA.

Interacts with DTNA. Interacts with TRIM28.

It is found in the cytoplasm. It localises to the perinuclear region. The protein resides in the nucleus. The protein localises to the cell membrane. Its function is as follows. May enhance ubiquitin ligase activity of RING-type zinc finger-containing E3 ubiquitin-protein ligases. Proposed to act through recruitment and/or stabilization of the Ubl-conjugating enzyme (E2) at the E3:substrate complex. In Rattus norvegicus (Rat), this protein is Melanoma-associated antigen E1 (Magee1).